Here is a 481-residue protein sequence, read N- to C-terminus: Glutamate--tRNA ligase 2 (481 aa).

A 'HIGH' region motif is present at residues 17 to 27 (PSPTGFLHIGG). Over residues 118-139 (AEQRAKKQPQRYDGRWRDRDPS) the composition is skewed to basic and acidic residues. The interval 118 to 143 (AEQRAKKQPQRYDGRWRDRDPSEAPA) is disordered. The short motif at 246 to 250 (KLSKR) is the 'KMSKS' region element. K249 provides a ligand contact to ATP.

The protein belongs to the class-I aminoacyl-tRNA synthetase family. Glutamate--tRNA ligase type 1 subfamily. As to quaternary structure, monomer.

It is found in the cytoplasm. The enzyme catalyses tRNA(Glu) + L-glutamate + ATP = L-glutamyl-tRNA(Glu) + AMP + diphosphate. In terms of biological role, catalyzes the attachment of glutamate to tRNA(Glu) in a two-step reaction: glutamate is first activated by ATP to form Glu-AMP and then transferred to the acceptor end of tRNA(Glu). The sequence is that of Glutamate--tRNA ligase 2 from Zymomonas mobilis subsp. mobilis (strain ATCC 31821 / ZM4 / CP4).